Reading from the N-terminus, the 364-residue chain is Alanine racemase (364 aa).

Residue K34 is the Proton acceptor; specific for D-alanine of the active site. K34 is modified (N6-(pyridoxal phosphate)lysine). R129 contacts substrate. The active-site Proton acceptor; specific for L-alanine is the Y259. Position 307 (M307) interacts with substrate.

Belongs to the alanine racemase family. It depends on pyridoxal 5'-phosphate as a cofactor.

The enzyme catalyses L-alanine = D-alanine. It participates in amino-acid biosynthesis; D-alanine biosynthesis; D-alanine from L-alanine: step 1/1. Functionally, catalyzes the interconversion of L-alanine and D-alanine. May also act on other amino acids. This chain is Alanine racemase (alr), found in Coxiella burnetii (strain RSA 331 / Henzerling II).